The chain runs to 673 residues: eEF1A lysine and N-terminal methyltransferase homolog (673 aa).

The protein belongs to the methyltransferase superfamily.

It catalyses the reaction L-lysyl-[protein] + S-adenosyl-L-methionine = N(6)-methyl-L-lysyl-[protein] + S-adenosyl-L-homocysteine + H(+). The catalysed reaction is N(6)-methyl-L-lysyl-[protein] + S-adenosyl-L-methionine = N(6),N(6)-dimethyl-L-lysyl-[protein] + S-adenosyl-L-homocysteine + H(+). The enzyme catalyses N-terminal glycyl-L-lysyl-L-glutamyl-[protein] + 3 S-adenosyl-L-methionine = N-terminal N,N,N-trimethyl-glycyl-L-lysyl-L-glutamyl-[protein] + 3 S-adenosyl-L-homocysteine + 3 H(+). Dual methyltransferase. It catalyzes N-terminal methylation of target proteins via its C-terminus. It catalyzes dimethylation on lysine residues of target proteins via its N-terminus. The sequence is that of eEF1A lysine and N-terminal methyltransferase homolog from Drosophila pseudoobscura pseudoobscura (Fruit fly).